A 394-amino-acid polypeptide reads, in one-letter code: Histidinol dehydrogenase (394 aa).

Tyr113, Gln172, and Asn195 together coordinate NAD(+). Substrate contacts are provided by Thr218, Gln240, and His243. Zn(2+) is bound by residues Gln240 and His243. Active-site proton acceptor residues include Glu294 and His295. Substrate is bound by residues His295, Asp327, Glu380, and His385. Asp327 lines the Zn(2+) pocket. His385 lines the Zn(2+) pocket.

This sequence belongs to the histidinol dehydrogenase family. Requires Zn(2+) as cofactor.

It catalyses the reaction L-histidinol + 2 NAD(+) + H2O = L-histidine + 2 NADH + 3 H(+). The protein operates within amino-acid biosynthesis; L-histidine biosynthesis; L-histidine from 5-phospho-alpha-D-ribose 1-diphosphate: step 9/9. Functionally, catalyzes the sequential NAD-dependent oxidations of L-histidinol to L-histidinaldehyde and then to L-histidine. This is Histidinol dehydrogenase from Sulfurisphaera tokodaii (strain DSM 16993 / JCM 10545 / NBRC 100140 / 7) (Sulfolobus tokodaii).